Reading from the N-terminus, the 272-residue chain is Eukaryotic translation initiation factor 3 subunit G (272 aa).

Disordered stretches follow at residues 1–28 (MPAL…PTEI) and 143–187 (AGKA…RGRD). The RRM domain maps to 190-268 (TAIRISNLSE…LILNVEWSKP (79 aa)).

This sequence belongs to the eIF-3 subunit G family. In terms of assembly, component of the eukaryotic translation initiation factor 3 (eIF-3) complex.

The protein localises to the cytoplasm. In terms of biological role, RNA-binding component of the eukaryotic translation initiation factor 3 (eIF-3) complex, which is involved in protein synthesis of a specialized repertoire of mRNAs and, together with other initiation factors, stimulates binding of mRNA and methionyl-tRNAi to the 40S ribosome. The eIF-3 complex specifically targets and initiates translation of a subset of mRNAs involved in cell proliferation. This subunit can bind 18S rRNA. In Culex quinquefasciatus (Southern house mosquito), this protein is Eukaryotic translation initiation factor 3 subunit G.